Here is a 222-residue protein sequence, read N- to C-terminus: Superoxide dismutase [Mn], mitochondrial (222 aa).

Residues 1–24 (MLCRAACSAGRRLGPAASTAGSRH) constitute a mitochondrion transit peptide. Residue H50 coordinates Mn(2+). At Y58 the chain carries 3'-nitrotyrosine. 2 positions are modified to N6-acetyllysine; alternate: K68 and K75. An N6-succinyllysine; alternate mark is found at K68 and K75. Residue H98 participates in Mn(2+) binding. K114 is modified (N6-acetyllysine). An N6-acetyllysine; alternate mark is found at K122 and K130. 2 positions are modified to N6-succinyllysine; alternate: K122 and K130. Mn(2+) is bound by residues D183 and H187. K202 is subject to N6-acetyllysine.

This sequence belongs to the iron/manganese superoxide dismutase family. As to quaternary structure, homotetramer. It depends on Mn(2+) as a cofactor. Nitrated under oxidative stress. Nitration coupled with oxidation inhibits the catalytic activity. In terms of processing, acetylation at Lys-122 decreases enzymatic activity. Deacetylated by SIRT3 upon exposure to ionizing radiations or after long fasting. Post-translationally, polyubiquitinated; leading to proteasomal degradation. Deubiquitinated by USP36 which increases protein stability.

It localises to the mitochondrion matrix. The enzyme catalyses 2 superoxide + 2 H(+) = H2O2 + O2. In terms of biological role, destroys superoxide anion radicals which are normally produced within the cells and which are toxic to biological systems. This chain is Superoxide dismutase [Mn], mitochondrial (Sod2), found in Rattus norvegicus (Rat).